The primary structure comprises 433 residues: MESLNALLQGMGLMHLGAGQAIMLLVSLLLLWLAIAKKFEPLLLLPIGFGGLLSNIPEAGMALTALESLLAHHDAGQLAVIAAKLNCAPDVHAIKEALALALPSVQNQMENLAVDMGYTPGVLALFYKVAIGSGVAPLVIFMGVGAMTDFGPLLANPRTLLLGAAAQFGIFATVLGALTLNYFGLIAFTLPQAAAIGIIGGADGPTAIYLSGKLAPELLGAIAVAAYSYMALVPLIQPPIMRALTSEKERKIRMVQLRTVSKREKILFPVVLLLLVALLLPDAAPLLGMFCFGNLMRESGVVERLSDTVQNGLINIVTIFLGLSVGAKLVADKFLQPQTLGILLLGVIAFGIGTAAGVLMAKLLNLCSKNKINPLIGSAGVSAVPMAARVSNKVGLESNPQNFLLMHAMGPNVAGVIGSAIAAGVMLKYVLAM.

The next 10 membrane-spanning stretches (helical) occupy residues 16–36, 42–62, 122–142, 168–188, 190–210, 216–236, 266–286, 311–331, 340–360, and 413–433; these read LGAG…LAIA, LLLL…AGMA, VLAL…VIFM, FGIF…LIAF, LPQA…AIYL, PELL…VPLI, ILFP…AAPL, NGLI…KLVA, LGIL…GVLM, and VAGV…VLAM.

This sequence belongs to the GcdB/MmdB/OadB family. In terms of assembly, heterotrimer of an alpha, a beta and a gamma subunit. The cofactor is Na(+).

The protein resides in the cell membrane. It catalyses the reaction oxaloacetate + 2 Na(+)(in) + H(+) = pyruvate + 2 Na(+)(out) + CO2. Functionally, catalyzes the decarboxylation of oxaloacetate coupled to Na(+) translocation. The chain is Oxaloacetate decarboxylase beta chain 2 (oadB2) from Salmonella typhi.